Consider the following 128-residue polypeptide: Probable prefoldin subunit 6 (128 aa).

This sequence belongs to the prefoldin subunit beta family. In terms of assembly, heterohexamer of two PFD-alpha type and four PFD-beta type subunits.

The protein localises to the cytoplasm. Functionally, binds specifically to cytosolic chaperonin (c-CPN) and transfers target proteins to it. Binds to nascent polypeptide chain and promotes folding in an environment in which there are many competing pathways for nonnative proteins. Required for positioning of the mitotic spindle. In Caenorhabditis briggsae, this protein is Probable prefoldin subunit 6.